An 80-amino-acid polypeptide reads, in one-letter code: Exodeoxyribonuclease 7 small subunit (80 aa).

Belongs to the XseB family. Heterooligomer composed of large and small subunits.

It is found in the cytoplasm. It carries out the reaction Exonucleolytic cleavage in either 5'- to 3'- or 3'- to 5'-direction to yield nucleoside 5'-phosphates.. Its function is as follows. Bidirectionally degrades single-stranded DNA into large acid-insoluble oligonucleotides, which are then degraded further into small acid-soluble oligonucleotides. The protein is Exodeoxyribonuclease 7 small subunit of Aliivibrio salmonicida (strain LFI1238) (Vibrio salmonicida (strain LFI1238)).